The chain runs to 198 residues: 7-methyl-GTP pyrophosphatase (198 aa).

Asp75 serves as the catalytic Proton acceptor.

Belongs to the Maf family. YceF subfamily. It depends on a divalent metal cation as a cofactor.

Its subcellular location is the cytoplasm. The enzyme catalyses N(7)-methyl-GTP + H2O = N(7)-methyl-GMP + diphosphate + H(+). Its function is as follows. Nucleoside triphosphate pyrophosphatase that hydrolyzes 7-methyl-GTP (m(7)GTP). May have a dual role in cell division arrest and in preventing the incorporation of modified nucleotides into cellular nucleic acids. The chain is 7-methyl-GTP pyrophosphatase from Bartonella quintana (strain Toulouse) (Rochalimaea quintana).